The following is a 469-amino-acid chain: MKPTVALVGRPNVGKSTLFNRLTRSRDALVADQPGLTRDRHYGQGRVGEKPYLVVDTGGFEPVVDEGILFEMAKQTLQAVDEADAVVFLVDGRAGLTPQDKIIANRLRQLDRPVFLAVNKAEGMKHAIAGAEFHELALGEPLVISAAHGDGVRELMELVLEGFPDEVEEEDSRHPKFAVIGRPNVGKSTLVNAILGEERVIAFDQAGTTRDSIYIDFEREGHTYTIIDTAGVRRRAKVNEMLEKFSVIKTMKAIEDANVAVLVLDAQLDISEQDATIAGFALEAGRALVVAVNKWDNLDGEQKENVRREIARKLNFLDFAKFHYISAIEGRGVADLFKSIDEAYRAAMSKLATPKLTRVLQVALERQQPPRSGLIRPKMRYAHQGGQNPPVIVVHGNALDSIPASYTRYLEHTFRKVFKLQGTPLRVQYKSSENPFDNDEKDKPRAKPKPMSKMRGREKEVRYGKNSKK.

2 consecutive EngA-type G domains span residues 3 to 167 (PTVA…PDEV) and 175 to 348 (PKFA…RAAM). GTP contacts are provided by residues 9–16 (GRPNVGKS), 56–60 (DTGGF), 119–122 (NKAE), 181–188 (GRPNVGKS), 228–232 (DTAGV), and 293–296 (NKWD). The region spanning 349–433 (SKLATPKLTR…PLRVQYKSSE (85 aa)) is the KH-like domain. The interval 429–469 (YKSSENPFDNDEKDKPRAKPKPMSKMRGREKEVRYGKNSKK) is disordered.

It belongs to the TRAFAC class TrmE-Era-EngA-EngB-Septin-like GTPase superfamily. EngA (Der) GTPase family. In terms of assembly, associates with the 50S ribosomal subunit.

Functionally, GTPase that plays an essential role in the late steps of ribosome biogenesis. In Chromobacterium violaceum (strain ATCC 12472 / DSM 30191 / JCM 1249 / CCUG 213 / NBRC 12614 / NCIMB 9131 / NCTC 9757 / MK), this protein is GTPase Der.